We begin with the raw amino-acid sequence, 288 residues long: Undecaprenyl-diphosphatase (288 aa).

8 consecutive transmembrane segments (helical) span residues 25–45 (GITE…NEFL), 53–73 (FIDM…MVIY), 93–113 (WKLW…GLLL), 121–141 (LSNF…FIWI), 171–191 (VLSI…GIIV), 196–216 (SVAA…YSGL), 231–251 (GQAA…LFVI), and 263–283 (FTVF…YGAV).

It belongs to the UppP family.

The protein resides in the cell membrane. It carries out the reaction di-trans,octa-cis-undecaprenyl diphosphate + H2O = di-trans,octa-cis-undecaprenyl phosphate + phosphate + H(+). Its function is as follows. Catalyzes the dephosphorylation of undecaprenyl diphosphate (UPP). Confers resistance to bacitracin. This Streptococcus thermophilus (strain CNRZ 1066) protein is Undecaprenyl-diphosphatase.